The following is a 132-amino-acid chain: Fatty acid-binding protein type 2 (132 aa).

At Ala-2 the chain carries N-acetylalanine.

Belongs to the calycin superfamily. Fatty-acid binding protein (FABP) family.

This is Fatty acid-binding protein type 2 from Fasciola hepatica (Liver fluke).